Reading from the N-terminus, the 215-residue chain is Adenylate kinase (215 aa).

Position 10–15 (glycine 10–threonine 15) interacts with ATP. Residues serine 30 to valine 59 form an NMP region. Residues threonine 31, arginine 36, leucine 57 to valine 59, glycine 85 to arginine 88, and glutamine 92 contribute to the AMP site. Positions glycine 126–aspartate 163 are LID. Arginine 127 contributes to the ATP binding site. Zn(2+) contacts are provided by cysteine 130 and cysteine 133. Position 136–137 (serine 136–tyrosine 137) interacts with ATP. Residues cysteine 150 and cysteine 153 each coordinate Zn(2+). AMP-binding residues include arginine 160 and arginine 171. Glutamine 199 serves as a coordination point for ATP.

It belongs to the adenylate kinase family. In terms of assembly, monomer.

It is found in the cytoplasm. It carries out the reaction AMP + ATP = 2 ADP. It participates in purine metabolism; AMP biosynthesis via salvage pathway; AMP from ADP: step 1/1. Functionally, catalyzes the reversible transfer of the terminal phosphate group between ATP and AMP. Plays an important role in cellular energy homeostasis and in adenine nucleotide metabolism. The polypeptide is Adenylate kinase (Clostridium acetobutylicum (strain ATCC 824 / DSM 792 / JCM 1419 / IAM 19013 / LMG 5710 / NBRC 13948 / NRRL B-527 / VKM B-1787 / 2291 / W)).